We begin with the raw amino-acid sequence, 110 residues long: Putative membrane protein insertion efficiency factor (110 aa).

This sequence belongs to the UPF0161 family.

It is found in the cell inner membrane. In terms of biological role, could be involved in insertion of integral membrane proteins into the membrane. The chain is Putative membrane protein insertion efficiency factor from Aliarcobacter butzleri (strain RM4018) (Arcobacter butzleri).